A 308-amino-acid chain; its full sequence is Elongation factor Ts (308 aa).

Residues T80–V83 form an involved in Mg(2+) ion dislocation from EF-Tu region.

It belongs to the EF-Ts family.

The protein localises to the cytoplasm. In terms of biological role, associates with the EF-Tu.GDP complex and induces the exchange of GDP to GTP. It remains bound to the aminoacyl-tRNA.EF-Tu.GTP complex up to the GTP hydrolysis stage on the ribosome. This chain is Elongation factor Ts, found in Allorhizobium ampelinum (strain ATCC BAA-846 / DSM 112012 / S4) (Agrobacterium vitis (strain S4)).